The sequence spans 464 residues: tRNA modification GTPase MnmE (464 aa).

Residues Arg-25, Glu-87, and Lys-130 each contribute to the (6S)-5-formyl-5,6,7,8-tetrahydrofolate site. Residues 226-386 (GLSVVLAGQP…LRAELLRIAG (161 aa)) form the TrmE-type G domain. K(+) is bound at residue Asn-236. GTP-binding positions include 236-241 (NVGKSS), 255-261 (TPIAGTT), and 280-283 (DTAG). A Mg(2+)-binding site is contributed by Ser-240. K(+) contacts are provided by Thr-255, Ile-257, and Thr-260. Mg(2+) is bound at residue Thr-261. Lys-464 serves as a coordination point for (6S)-5-formyl-5,6,7,8-tetrahydrofolate.

The protein belongs to the TRAFAC class TrmE-Era-EngA-EngB-Septin-like GTPase superfamily. TrmE GTPase family. In terms of assembly, homodimer. Heterotetramer of two MnmE and two MnmG subunits. It depends on K(+) as a cofactor.

Its subcellular location is the cytoplasm. Exhibits a very high intrinsic GTPase hydrolysis rate. Involved in the addition of a carboxymethylaminomethyl (cmnm) group at the wobble position (U34) of certain tRNAs, forming tRNA-cmnm(5)s(2)U34. The sequence is that of tRNA modification GTPase MnmE from Burkholderia orbicola (strain MC0-3).